The sequence spans 619 residues: Guanylate cyclase soluble subunit beta-1 (619 aa).

H105 contacts heme. The Guanylate cyclase domain occupies 421-554 (TILFSGIVGF…NTVNLTSRTE (134 aa)).

This sequence belongs to the adenylyl cyclase class-4/guanylyl cyclase family. In terms of assembly, the active enzyme is formed by a heterodimer of an alpha and a beta subunit. Homotetramer; dimer of dimers (in vitro). Heterodimer with GUCY1A1. Can also form inactive homodimers in vitro. It depends on heme as a cofactor. Lung and brain.

It is found in the cytoplasm. The catalysed reaction is GTP = 3',5'-cyclic GMP + diphosphate. Activated by nitric oxide in the presence of magnesium or manganese ions. Its function is as follows. Mediates responses to nitric oxide (NO) by catalyzing the biosynthesis of the signaling molecule cGMP. The protein is Guanylate cyclase soluble subunit beta-1 (Gucy1b1) of Rattus norvegicus (Rat).